Reading from the N-terminus, the 603-residue chain is Complement factor I (603 aa).

An N-terminal signal peptide occupies residues 1–18; sequence MKLAHLSLFLLALHLSSS. Disulfide bonds link Cys-36–Cys-260, Cys-46–Cys-57, Cys-51–Cys-62, Cys-64–Cys-96, Cys-70–Cys-89, Cys-78–Cys-109, Cys-144–Cys-186, Cys-157–Cys-219, Cys-191–Cys-201, Cys-234–Cys-252, Cys-246–Cys-261, Cys-264–Cys-276, Cys-271–Cys-289, Cys-283–Cys-298, Cys-348–Cys-473, Cys-386–Cys-402, Cys-394–Cys-464, Cys-487–Cys-551, Cys-515–Cys-530, and Cys-541–Cys-570. Positions 58–111 constitute a Kazal-like domain; sequence IEGTCICKLPYQCPRAGTPVCAMNGRSYPTYCHQKSFECLHPEIKFSHNGTCAA. N-linked (GlcNAc...) asparagine glycans are attached at residues Asn-106, Asn-116, Asn-174, and Asn-182. The SRCR domain maps to 117-217; the sequence is VSLIYGRTKT…TELSNGLAGV (101 aa). LDL-receptor class A domains lie at 218–262 and 263–299; these read VCYK…LCCK and GCRGNASLCKSGVCIPDQYKCNGEVDCITGEDESRCE. Ca(2+) is bound by residues Lys-244, Asn-247, Val-249, Asp-251, Asp-257, and Glu-258. Asn-267 carries an N-linked (GlcNAc...) asparagine glycan. Tyr-281, Asn-284, Glu-286, Asp-288, Asp-294, and Glu-295 together coordinate Ca(2+). Positions 361 to 594 constitute a Peptidase S1 domain; sequence VIGGKPANVG…YFDWISYHVG (234 aa). Active-site charge relay system residues include His-401 and Asp-449. The N-linked (GlcNAc...) asparagine glycan is linked to Asn-514. Ser-545 acts as the Charge relay system in catalysis. Residue Asn-556 is glycosylated (N-linked (GlcNAc...) asparagine).

This sequence belongs to the peptidase S1 family. Heterodimer of a light and heavy chains; disulfide-linked. The fully processed and mature protein circulates as a zymogen, and is allosterically activated by substrate-induced remodeling of the active site. Interacts with C3b. Interacts with complement factor H. In terms of tissue distribution, expressed in the liver by hepatocytes. Also present in other cells such as monocytes, fibroblasts or keratinocytes.

The protein localises to the secreted. It is found in the extracellular space. The catalysed reaction is Inactivates complement subcomponents C3b, iC3b and C4b by proteolytic cleavage.. Its function is as follows. Trypsin-like serine protease that plays an essential role in regulating the immune response by controlling all complement pathways. Inhibits these pathways by cleaving three peptide bonds in the alpha-chain of C3b and two bonds in the alpha-chain of C4b thereby inactivating these proteins. Essential cofactors for these reactions include factor H and C4BP in the fluid phase and membrane cofactor protein/CD46 and CR1 on cell surfaces. The presence of these cofactors on healthy cells allows degradation of deposited C3b by CFI in order to prevent undesired complement activation, while in apoptotic cells or microbes, the absence of such cofactors leads to C3b-mediated complement activation and subsequent opsonization. This is Complement factor I (Cfi) from Mus musculus (Mouse).